Reading from the N-terminus, the 867-residue chain is Protein translocase subunit SecA (867 aa).

ATP-binding positions include Gln-85, Gly-103–Thr-107, and Asp-491.

The protein belongs to the SecA family. In terms of assembly, monomer and homodimer. Part of the essential Sec protein translocation apparatus which comprises SecA, SecYEG and auxiliary proteins SecDF. Other proteins may also be involved.

It localises to the cell membrane. It is found in the cytoplasm. It catalyses the reaction ATP + H2O + cellular proteinSide 1 = ADP + phosphate + cellular proteinSide 2.. Functionally, part of the Sec protein translocase complex. Interacts with the SecYEG preprotein conducting channel. Has a central role in coupling the hydrolysis of ATP to the transfer of proteins into and across the cell membrane, serving as an ATP-driven molecular motor driving the stepwise translocation of polypeptide chains across the membrane. This is Protein translocase subunit SecA from Mycoplasmopsis pulmonis (strain UAB CTIP) (Mycoplasma pulmonis).